We begin with the raw amino-acid sequence, 842 residues long: Oligopeptide transporter phomP2' (842 aa).

Positions 1-58 (MEADPKVPFTDEMNIQDEHNWESGSWSSSRRSNDSNVTLLSRRSSVEQHEDERQKDSD) are disordered. Low complexity predominate over residues 23 to 36 (SGSWSSSRRSNDSN). N-linked (GlcNAc...) asparagine glycosylation is found at Asn-33 and Asn-36. Residues 44 to 58 (SSVEQHEDERQKDSD) are compositionally biased toward basic and acidic residues. 6 consecutive transmembrane segments (helical) span residues 105–125 (VWLLSTFWVLAGCSISTVYYF), 177–197 (ALVVIAYWGSSYTAYGLGPLS), 210–230 (PWAITFLVTTQLTGYGLVGLY), 268–288 (VFMAIASAAFVYQWLPSFVFP), 315–335 (GFGLMDFSLDWNYVAFLSPLF), and 345–365 (FVGAALAVWITYPVAYFSDAL). 2 N-linked (GlcNAc...) asparagine glycosylation sites follow: Asn-386 and Asn-398. A run of 4 helical transmembrane segments spans residues 415 to 435 (AMHFFWGFASASAIVTYAVLF), 478 to 498 (AWYALLLAVCLCLGTIQLYAG), 505 to 525 (WGLQLVVAISALFTLPCGMLF), and 585 to 605 (WELLVAQVYGTLLGPFVNWAV). A compositionally biased stretch (gly residues) spans 629 to 649 (QGLGLGQGGGGGGGGGGGGGQ). Positions 629 to 657 (QGLGLGQGGGGGGGGGGGGGQQQRAAGAH) are disordered. 3 helical membrane passes run 668-688 (NFFSSSVIWGVMGPARVFGGG), 700-720 (WLLPSGFAVGAAAVLLLWLIH), and 731-751 (WPLHPAIIFHGASLFPVFPTT). N-linked (GlcNAc...) asparagine glycosylation is present at Asn-752. The helical transmembrane segment at 784–804 (AGLDCGAQLVQMVLGLAFLVF) threads the bilayer.

The protein belongs to the oligopeptide OPT transporter family.

It is found in the membrane. Its function is as follows. Oligopeptide transporter; part of the gene cluster that mediates the biosynthesis of the phomopsins, a group of hexapeptide mycotoxins which infects lupins and causes lupinosis disease in livestock. The chain is Oligopeptide transporter phomP2' from Diaporthe leptostromiformis (Lupinosis disease fungus).